We begin with the raw amino-acid sequence, 1402 residues long: Phospholipid-transporting ATPase dnf2 (1402 aa).

Helical transmembrane passes span 109-129, 135-155, 457-477, and 501-521; these read FQNVANLFFLFLVILQSISIF, PGLAAVPLIVVVGITAVKDAI, LNFIILFSMCFVCAVVEGIAW, and VVTFFTGVILFQNLVPISLYI. Aspartate 569 serves as the catalytic 4-aspartylphosphate intermediate. ATP is bound by residues aspartate 569, lysine 570, threonine 571, glutamate 700, phenylalanine 741, serine 743, lysine 746, lysine 764, arginine 799, threonine 800, threonine 879, glycine 880, aspartate 881, arginine 986, and lysine 992. Aspartate 569 serves as a coordination point for Mg(2+). Threonine 571 serves as a coordination point for Mg(2+). Aspartate 1012 contacts Mg(2+). Residues asparagine 1015 and aspartate 1016 each contribute to the ATP site. Aspartate 1016 provides a ligand contact to Mg(2+). A run of 6 helical transmembrane segments spans residues 1066–1086, 1101–1121, 1151–1171, 1193–1213, 1218–1238, and 1260–1280; these read VAEMVNNFFYKSVVWTFTLFW, YTYVMLFNLIFSSLPVIVMGV, IFIGYMLDGFYQSVICFFFSF, LGVYVAAPTIMVVDTYVILNQ, VFSIGLWALSCLTFWFWTGVY, and FWAVLCGTIVSCLFPKFLFMT. Position 1275 (lysine 1275) interacts with a 1,2-diacyl-sn-glycero-3-phospho-L-serine.

This sequence belongs to the cation transport ATPase (P-type) (TC 3.A.3) family. Type IV subfamily. Mg(2+) serves as cofactor.

Its subcellular location is the cell membrane. The protein resides in the endoplasmic reticulum membrane. It carries out the reaction ATP + H2O + phospholipidSide 1 = ADP + phosphate + phospholipidSide 2.. The enzyme catalyses a 1,2-diacyl-sn-glycero-3-phosphoethanolamine(out) + ATP + H2O = a 1,2-diacyl-sn-glycero-3-phosphoethanolamine(in) + ADP + phosphate + H(+). It catalyses the reaction a 1,2-diacyl-sn-glycero-3-phosphocholine(out) + ATP + H2O = a 1,2-diacyl-sn-glycero-3-phosphocholine(in) + ADP + phosphate + H(+). The catalysed reaction is a beta-D-glucosyl-(1&lt;-&gt;1')-N-acylsphing-4-enine(out) + ATP + H2O = a beta-D-glucosyl-(1&lt;-&gt;1')-N-acylsphing-4-enine(in) + ADP + phosphate + H(+). It carries out the reaction a 1,2-diacyl-sn-glycero-3-phospho-L-serine(out) + ATP + H2O = a 1,2-diacyl-sn-glycero-3-phospho-L-serine(in) + ADP + phosphate + H(+). Functionally, catalytic component of a P4-ATPase flippase complex which catalyzes the hydrolysis of ATP coupled to the transport of glucosylceramide, phosphatidylcholine, phosphatidylethanolamine, and small amounts of phosphatidylserine from the lumenal to the cytosolic leaflet of the cell membrane and ensures the maintenance of asymmetric distribution of phospholipids. This Schizosaccharomyces pombe (strain 972 / ATCC 24843) (Fission yeast) protein is Phospholipid-transporting ATPase dnf2.